We begin with the raw amino-acid sequence, 298 residues long: Protoheme IX farnesyltransferase 1 (298 aa).

The next 9 helical transmembrane spans lie at 21-41, 43-63, 94-114, 118-138, 144-164, 168-188, 215-235, 236-256, and 274-294; these read QVWW…INSF, SYLI…SMGA, KGAF…LLIF, LAAL…SYLL, YSII…WYTV, FSWI…VHVW, TAVS…IPYF, LGFF…PIVI, and FIYT…IHII.

Belongs to the UbiA prenyltransferase family. Protoheme IX farnesyltransferase subfamily.

It is found in the cell membrane. The catalysed reaction is heme b + (2E,6E)-farnesyl diphosphate + H2O = Fe(II)-heme o + diphosphate. Its pathway is porphyrin-containing compound metabolism; heme O biosynthesis; heme O from protoheme: step 1/1. Its function is as follows. Converts heme B (protoheme IX) to heme O by substitution of the vinyl group on carbon 2 of heme B porphyrin ring with a hydroxyethyl farnesyl side group. This chain is Protoheme IX farnesyltransferase 1, found in Picrophilus torridus (strain ATCC 700027 / DSM 9790 / JCM 10055 / NBRC 100828 / KAW 2/3).